A 541-amino-acid chain; its full sequence is Kinesin light chain 1 (541 aa).

Residues 27-156 adopt a coiled-coil conformation; it reads KTKQVIQGLE…HLEFMNQLKK (130 aa). Residues 156–176 show a composition bias toward basic and acidic residues; that stretch reads KYDDDISPSEDKDSDSSKEPL. Residues 156–201 form a disordered region; sequence KYDDDISPSEDKDSDSSKEPLDDLFPNDEDEPGQGIQHSDSSAAAA. Residue Ser162 is modified to Phosphoserine. 5 TPR repeats span residues 211-244, 253-286, 295-328, 337-370, and 380-413; these read LRTL…LEKT, ATML…REKT, AATL…REKV, AKQL…YQTK, and AKTK…AHEA. Tyr448 is modified (phosphotyrosine). Ser459 is modified (phosphoserine). Residues 463–496 form a TPR 6 repeat; sequence TTTLKNLGALYRRQGKFEAAETLEEAAMRSRKQG. The disordered stretch occupies residues 493 to 541; that stretch reads RKQGLDNVHKQRVAEVLNDPESMEKRRSRESLNMDVVKYESGPDGGEEA. Basic and acidic residues-rich tracts occupy residues 495–505 and 514–524; these read QGLDNVHKQRV and SMEKRRSRESL. A phosphoserine; by AMPK mark is found at Ser520 and Ser523.

It belongs to the kinesin light chain family. In terms of assembly, oligomeric complex composed of two heavy chains and two light chains. Interacts with SPAG9. Interacts with ATCAY; may link mitochondria to KLC1 and regulate mitochondria localization into neuron projections. Interacts (via TPR repeats) with TOR1A; the interaction associates TOR1A with the kinesin oligomeric complex. Interacts with BORCS5. Interacts with MAPK8IP3/JIP3 and NTRK2/TRKB; interaction with NTRK2/TRKB is mediated by MAPK8IP3/JIP3. Interacts with CLSTN1; phosphorylation at Ser-459 inhibits interaction with CLSTN1. In terms of processing, phosphorylation at Ser-459 by ERK inhibits interaction with CLSTN1 and localization to cytoplasmic vesicles.

It is found in the cell projection. The protein localises to the growth cone. It localises to the cytoplasmic vesicle. Its subcellular location is the cytoplasm. The protein resides in the cytoskeleton. Kinesin is a microtubule-associated force-producing protein that may play a role in organelle transport. The light chain may function in coupling of cargo to the heavy chain or in the modulation of its ATPase activity. In Mus musculus (Mouse), this protein is Kinesin light chain 1 (Klc1).